We begin with the raw amino-acid sequence, 189 residues long: Putative manganese efflux pump MntP (189 aa).

A run of 6 helical transmembrane segments spans residues 3–23, 41–61, 65–85, 106–128, 141–161, and 168–188; these read PVSLIFLAFAMSTDAFAAAIG, IIFGVIEAITPLVGWLLGQAA, VADWDHWIAFVLLVLLGLHMI, WILAVTALATSIDALAVGVGLAF, GLATMTMVTLGTMLGRALGAV, and MVGGVVLILVGATILYEHLSA.

It belongs to the MntP (TC 9.B.29) family.

The protein localises to the cell inner membrane. Probably functions as a manganese efflux pump. This chain is Putative manganese efflux pump MntP, found in Pseudomonas aeruginosa (strain LESB58).